The primary structure comprises 95 residues: Co-chaperonin GroES (95 aa).

Belongs to the GroES chaperonin family. Heptamer of 7 subunits arranged in a ring. Interacts with the chaperonin GroEL.

It localises to the cytoplasm. Together with the chaperonin GroEL, plays an essential role in assisting protein folding. The GroEL-GroES system forms a nano-cage that allows encapsulation of the non-native substrate proteins and provides a physical environment optimized to promote and accelerate protein folding. GroES binds to the apical surface of the GroEL ring, thereby capping the opening of the GroEL channel. This Rickettsia akari (strain Hartford) protein is Co-chaperonin GroES.